The sequence spans 382 residues: 1-deoxy-D-xylulose 5-phosphate reductoisomerase (382 aa).

NADPH is bound by residues Thr-10, Gly-11, Ser-12, Ile-13, Gly-36, and Asn-122. Residue Lys-123 participates in 1-deoxy-D-xylulose 5-phosphate binding. Glu-124 is an NADPH binding site. Asp-148 lines the Mn(2+) pocket. Residues Ser-149, Glu-150, Ser-174, and His-197 each contribute to the 1-deoxy-D-xylulose 5-phosphate site. Glu-150 is a Mn(2+) binding site. Residue Gly-203 coordinates NADPH. 1-deoxy-D-xylulose 5-phosphate contacts are provided by Ser-210, Asn-215, Lys-216, and Glu-219. A Mn(2+)-binding site is contributed by Glu-219.

Belongs to the DXR family. It depends on Mg(2+) as a cofactor. Mn(2+) serves as cofactor.

The catalysed reaction is 2-C-methyl-D-erythritol 4-phosphate + NADP(+) = 1-deoxy-D-xylulose 5-phosphate + NADPH + H(+). It participates in isoprenoid biosynthesis; isopentenyl diphosphate biosynthesis via DXP pathway; isopentenyl diphosphate from 1-deoxy-D-xylulose 5-phosphate: step 1/6. Functionally, catalyzes the NADPH-dependent rearrangement and reduction of 1-deoxy-D-xylulose-5-phosphate (DXP) to 2-C-methyl-D-erythritol 4-phosphate (MEP). The protein is 1-deoxy-D-xylulose 5-phosphate reductoisomerase of Prosthecochloris aestuarii (strain DSM 271 / SK 413).